The sequence spans 453 residues: Probable glycine dehydrogenase (decarboxylating) subunit 1 (453 aa).

The protein belongs to the GcvP family. N-terminal subunit subfamily. As to quaternary structure, the glycine cleavage system is composed of four proteins: P, T, L and H. In this organism, the P 'protein' is a heterodimer of two subunits.

It carries out the reaction N(6)-[(R)-lipoyl]-L-lysyl-[glycine-cleavage complex H protein] + glycine + H(+) = N(6)-[(R)-S(8)-aminomethyldihydrolipoyl]-L-lysyl-[glycine-cleavage complex H protein] + CO2. In terms of biological role, the glycine cleavage system catalyzes the degradation of glycine. The P protein binds the alpha-amino group of glycine through its pyridoxal phosphate cofactor; CO(2) is released and the remaining methylamine moiety is then transferred to the lipoamide cofactor of the H protein. The polypeptide is Probable glycine dehydrogenase (decarboxylating) subunit 1 (Nitrosomonas europaea (strain ATCC 19718 / CIP 103999 / KCTC 2705 / NBRC 14298)).